The sequence spans 338 residues: Eukaryotic translation initiation factor 3 subunit H (338 aa).

Positions 22–154 constitute an MPN domain; it reads VQCDGLAVMK…LKAYRLTPQA (133 aa).

It belongs to the eIF-3 subunit H family. Component of the eukaryotic translation initiation factor 3 (eIF-3) complex. The eIF-3 complex interacts with pix. Interacts with mxt.

The protein localises to the cytoplasm. In terms of biological role, component of the eukaryotic translation initiation factor 3 (eIF-3) complex, which is involved in protein synthesis of a specialized repertoire of mRNAs and, together with other initiation factors, stimulates binding of mRNA and methionyl-tRNAi to the 40S ribosome. The eIF-3 complex specifically targets and initiates translation of a subset of mRNAs involved in cell proliferation. The sequence is that of Eukaryotic translation initiation factor 3 subunit H from Drosophila yakuba (Fruit fly).